The chain runs to 99 residues: Defensin-like protein 2 (99 aa).

The signal sequence occupies residues 1–30 (MAMAKKSVSSFTLIFILVLVIFEVPEIKAQ). Intrachain disulfides connect Cys34-Cys86, Cys47-Cys71, Cys56-Cys81, and Cys60-Cys83. Residues 94–99 (ILRGGI) constitute a propeptide that is removed on maturation.

The protein belongs to the DEFL family. Protease inhibitor I18 (RTI/MTI-2) subfamily.

It localises to the secreted. Functionally, inhibits bovine beta-trypsin and alpha-chymotrypsin on a 1:1 molar basis. The sequence is that of Defensin-like protein 2 from Sinapis alba (White mustard).